A 172-amino-acid chain; its full sequence is Peptidyl-prolyl cis-trans isomerase CYP18-4 (172 aa).

Positions 7–170 (FFDMSLSGTP…KVVTITDCGQ (164 aa)) constitute a PPIase cyclophilin-type domain.

It belongs to the cyclophilin-type PPIase family. Interacts with A.tumefaciens VirD2. In terms of tissue distribution, ubiquitous, with higher levels in roots and flowers. Confined to vascular tissues. Also detected in stigmas, base of siliques and anthers.

It localises to the cytoplasm. The catalysed reaction is [protein]-peptidylproline (omega=180) = [protein]-peptidylproline (omega=0). Its activity is regulated as follows. Binds cyclosporin A (CsA). CsA mediates some of its effects via an inhibitory action on PPIase. Its function is as follows. PPIases accelerate the folding of proteins. It catalyzes the cis-trans isomerization of proline imidic peptide bonds in oligopeptides. This is Peptidyl-prolyl cis-trans isomerase CYP18-4 (CYP18-4) from Arabidopsis thaliana (Mouse-ear cress).